We begin with the raw amino-acid sequence, 227 residues long: PKHD-type hydroxylase Bxeno_B2194 (227 aa).

Positions Lys-78 to Ser-178 constitute a Fe2OG dioxygenase domain. The Fe cation site is built by His-96, Asp-98, and His-159. Arg-169 contributes to the 2-oxoglutarate binding site.

It depends on Fe(2+) as a cofactor. The cofactor is L-ascorbate.

This Paraburkholderia xenovorans (strain LB400) protein is PKHD-type hydroxylase Bxeno_B2194.